Consider the following 299-residue polypeptide: tRNA(Met) cytidine acetate ligase (299 aa).

Residues 6 to 19, G100, N157, and R182 contribute to the ATP site; that span reads IAEY…HIYM.

It belongs to the TmcAL family.

It localises to the cytoplasm. It catalyses the reaction cytidine(34) in elongator tRNA(Met) + acetate + ATP = N(4)-acetylcytidine(34) in elongator tRNA(Met) + AMP + diphosphate. Catalyzes the formation of N(4)-acetylcytidine (ac(4)C) at the wobble position of elongator tRNA(Met), using acetate and ATP as substrates. First activates an acetate ion to form acetyladenylate (Ac-AMP) and then transfers the acetyl group to tRNA to form ac(4)C34. This Mycoplasma mobile (strain ATCC 43663 / 163K / NCTC 11711) (Mesomycoplasma mobile) protein is tRNA(Met) cytidine acetate ligase.